Reading from the N-terminus, the 263-residue chain is Microtubule-associated protein RP/EB family member 1 (263 aa).

Residues 14–116 (NLSRHDMLAW…FVQWFKKFFD (103 aa)) form the Calponin-homology (CH) domain. The segment at 150-182 (KPLGTGSAGPQRPIVAQRTPATPKGGTGMVKKA) is disordered. Residues 180-250 (KKAAGDDESA…LYATDEGFVI (71 aa)) enclose the EB1 C-terminal domain.

Belongs to the MAPRE family.

It is found in the cytoplasm. It localises to the cytoskeleton. The protein resides in the microtubule organizing center. The protein localises to the centrosome. Its subcellular location is the golgi apparatus. It is found in the spindle. It localises to the spindle pole. Functionally, plus-end tracking protein (+TIP) that binds to the plus-end of microtubules and regulates the dynamics of the microtubule cytoskeleton. Promotes cytoplasmic microtubule nucleation and elongation. Involved in mitotic spindle positioning by stabilizing microtubules and promoting dynamic connection between astral microtubules and the cortex during mitotic chromosome segregation. This Coturnix japonica (Japanese quail) protein is Microtubule-associated protein RP/EB family member 1 (MAPRE1).